The sequence spans 561 residues: Oxygen-dependent choline dehydrogenase (561 aa).

An FAD-binding site is contributed by 7–36 (DYIIVGAGSAGNVLASRLAEDADVTVLLLE). His-474 serves as the catalytic Proton acceptor.

Belongs to the GMC oxidoreductase family. Requires FAD as cofactor.

It carries out the reaction choline + A = betaine aldehyde + AH2. It catalyses the reaction betaine aldehyde + NAD(+) + H2O = glycine betaine + NADH + 2 H(+). Its pathway is amine and polyamine biosynthesis; betaine biosynthesis via choline pathway; betaine aldehyde from choline (cytochrome c reductase route): step 1/1. Its function is as follows. Involved in the biosynthesis of the osmoprotectant glycine betaine. Catalyzes the oxidation of choline to betaine aldehyde and betaine aldehyde to glycine betaine at the same rate. In Paraburkholderia xenovorans (strain LB400), this protein is Oxygen-dependent choline dehydrogenase.